Here is a 504-residue protein sequence, read N- to C-terminus: Glucose-6-phosphate isomerase (504 aa).

The Proton donor role is filled by Glu333. Residues His364 and Lys473 contribute to the active site.

The protein belongs to the GPI family.

It localises to the cytoplasm. The catalysed reaction is alpha-D-glucose 6-phosphate = beta-D-fructose 6-phosphate. It functions in the pathway carbohydrate biosynthesis; gluconeogenesis. The protein operates within carbohydrate degradation; glycolysis; D-glyceraldehyde 3-phosphate and glycerone phosphate from D-glucose: step 2/4. In terms of biological role, catalyzes the reversible isomerization of glucose-6-phosphate to fructose-6-phosphate. The polypeptide is Glucose-6-phosphate isomerase (Xanthomonas oryzae pv. oryzae (strain KACC10331 / KXO85)).